The sequence spans 210 residues: Ras-related protein Rab-43 (210 aa).

23 to 30 (GDASVGKT) contacts GTP. The Effector region signature appears at 45–53 (QGSTIGVDF). At S47 the chain carries Phosphoserine. 71 to 75 (DTAGQ) is a GTP binding site. T80 is subject to Phosphothreonine. GTP-binding positions include 129–132 (NKSD) and 161–162 (AK). S-geranylgeranyl cysteine attachment occurs at residues C208 and C210. C210 is subject to Cysteine methyl ester.

The protein belongs to the small GTPase superfamily. Rab family. As to quaternary structure, interacts with GDI1, GDI2 and CHM; phosphorylation at Thr-80 disrupts these interactions.

It is found in the cytoplasmic vesicle. It localises to the phagosome. The protein resides in the phagosome membrane. Its subcellular location is the golgi apparatus. The protein localises to the trans-Golgi network membrane. It is found in the trans-Golgi network. Functionally, the small GTPases Rab are key regulators of intracellular membrane trafficking, from the formation of transport vesicles to their fusion with membranes. Rabs cycle between an inactive GDP-bound form and an active GTP-bound form that is able to recruit to membranes different set of downstream effectors directly responsible for vesicle formation, movement, tethering and fusion. The low intrinsic GTPase activity of RAB43 is activated by USP6NL. Involved in retrograde transport from the endocytic pathway to the Golgi apparatus. Involved in the transport of Shiga toxin from early and recycling endosomes to the trans-Golgi network. Required for the structural integrity of the Golgi complex. Plays a role in the maturation of phagosomes that engulf pathogens, such as S.aureus and Mycobacterium. The polypeptide is Ras-related protein Rab-43 (Rab43) (Rattus norvegicus (Rat)).